Reading from the N-terminus, the 719-residue chain is NF-kappa-B inhibitor zeta (719 aa).

A compositionally biased stretch (low complexity) spans 46–81 (GACDGGCSASGPSAPGSPGSDSSDFSSASSVSSCGA). The interval 46–97 (GACDGGCSASGPSAPGSPGSDSSDFSSASSVSSCGAVESRPRGGARAERLQV) is disordered. The segment covering 84 to 97 (SRPRGGARAERLQV) has biased composition (basic and acidic residues). An OCA domain is found at 108–130 (RGPFQGVRVKNSVKELLLHIRSH). Positions 164–179 (KRKGSDSLSDGPACKR) match the Nuclear localization signal motif. 2 disordered regions span residues 188-210 (LTPP…ESKQ) and 289-343 (YSPQ…FAPL). The segment covering 201–210 (EDVHHNESKQ) has biased composition (basic and acidic residues). A required for transcriptional activity region spans residues 322 to 394 (SYEPHLFGRE…LARPDASSTP (73 aa)). The tract at residues 405–719 (GGNPMSTTQL…KSIQQRAPPY (315 aa)) is interaction with NFKB1/p50. 7 ANK repeats span residues 444 to 473 (DGDT…ALHM), 480 to 509 (NGQS…QVNT), 513 to 542 (WGRT…GSNQ), 552 to 581 (DGLT…HSPE), 583 to 608 (QELL…AVEA), 613 to 642 (SGRT…CLSF), and 649 to 682 (NGNT…DPST).

As to quaternary structure, interacts with NFKB1/p50. Interacts with RELA. Interacts with AKIRIN2.

It is found in the nucleus. Involved in regulation of NF-kappa-B transcription factor complexes. Inhibits NF-kappa-B activity without affecting its nuclear translocation upon stimulation. Inhibits DNA-binding of RELA and NFKB1/p50, and of the NF-kappa-B p65-p50 heterodimer and the NF-kappa-B p50-p50 homodimer. Also seems to activate NF-kappa-B-mediated transcription. In vitro, upon association with NFKB1/p50 has transcriptional activation activity and, together with NFKB1/p50 and RELA, is recruited to LCN2 promoters. Promotes transcription of LCN2 and DEFB4. Is recruited to IL-6 promoters and activates IL-6 but decreases TNF-alpha production in response to LPS. Seems to be involved in the induction of inflammatory genes activated through TLR/IL-1 receptor signaling. Involved in the induction of T helper 17 cells (Th17) differentiation upon recognition of antigen by T cell antigen receptor (TCR). This Bos taurus (Bovine) protein is NF-kappa-B inhibitor zeta (NFKBIZ).